The following is a 314-amino-acid chain: 2,3,4,5-tetrahydropyridine-2,6-dicarboxylate N-succinyltransferase (314 aa).

Residues aspartate 163 and glutamate 180 each coordinate Mg(2+). Glutamate 196 functions as the Acyl-anhydride intermediate in the catalytic mechanism. Succinyl-CoA is bound by residues arginine 198, glycine 213, serine 216, alanine 239, 254–255 (EA), glycine 262, lysine 274, and 287–290 (RRNS).

Belongs to the type 2 tetrahydrodipicolinate N-succinyltransferase family. Homotrimer.

It is found in the cytoplasm. The catalysed reaction is (S)-2,3,4,5-tetrahydrodipicolinate + succinyl-CoA + H2O = (S)-2-succinylamino-6-oxoheptanedioate + CoA. Its pathway is amino-acid biosynthesis; L-lysine biosynthesis via DAP pathway; LL-2,6-diaminopimelate from (S)-tetrahydrodipicolinate (succinylase route): step 1/3. Its function is as follows. Catalyzes the conversion of the cyclic tetrahydrodipicolinate (THDP) into the acyclic N-succinyl-L-2-amino-6-oxopimelate using succinyl-CoA. This Mycolicibacterium smegmatis (strain ATCC 700084 / mc(2)155) (Mycobacterium smegmatis) protein is 2,3,4,5-tetrahydropyridine-2,6-dicarboxylate N-succinyltransferase.